The primary structure comprises 525 residues: GMP synthase [glutamine-hydrolyzing] (525 aa).

The 199-residue stretch at 9-207 (RILILDFGSQ…VLQLCACEKL (199 aa)) folds into the Glutamine amidotransferase type-1 domain. Cys86 functions as the Nucleophile in the catalytic mechanism. Catalysis depends on residues His181 and Glu183. The 193-residue stretch at 208 to 400 (WTPANIVEDA…LGLPYDMVYR (193 aa)) folds into the GMPS ATP-PPase domain. 235–241 (SGGVDSS) serves as a coordination point for ATP.

As to quaternary structure, homodimer.

It catalyses the reaction XMP + L-glutamine + ATP + H2O = GMP + L-glutamate + AMP + diphosphate + 2 H(+). It participates in purine metabolism; GMP biosynthesis; GMP from XMP (L-Gln route): step 1/1. Its function is as follows. Catalyzes the synthesis of GMP from XMP. The protein is GMP synthase [glutamine-hydrolyzing] of Cellvibrio japonicus (strain Ueda107) (Pseudomonas fluorescens subsp. cellulosa).